Consider the following 396-residue polypeptide: Phosphoglycerate kinase (396 aa).

Substrate-binding positions include 21–23 (DFN), Arg-36, 59–62 (HLGK), Arg-119, and Arg-156. Residues Lys-206, Gly-294, Glu-325, and 352 to 355 (GGDS) each bind ATP.

It belongs to the phosphoglycerate kinase family. In terms of assembly, monomer.

The protein localises to the cytoplasm. The enzyme catalyses (2R)-3-phosphoglycerate + ATP = (2R)-3-phospho-glyceroyl phosphate + ADP. It functions in the pathway carbohydrate degradation; glycolysis; pyruvate from D-glyceraldehyde 3-phosphate: step 2/5. The protein is Phosphoglycerate kinase of Listeria welshimeri serovar 6b (strain ATCC 35897 / DSM 20650 / CCUG 15529 / CIP 8149 / NCTC 11857 / SLCC 5334 / V8).